The primary structure comprises 290 residues: L-proline cis-3-hydroxylase 2 (290 aa).

Fe cation-binding residues include His107, Asp109, and His158. Arg168 provides a ligand contact to 2-oxoglutarate.

Belongs to the L-proline cis-4-/cis-3-hydroxylase family. Homodimer. The cofactor is Fe(2+).

The enzyme catalyses L-proline + 2-oxoglutarate + O2 = cis-3-hydroxy-L-proline + succinate + CO2. Its activity is regulated as follows. Inhibited by metal ions such as Co(2+), Zn(2+), Ni(2+) or Cu(2+). Is also inhibited by EDTA in vitro. Functionally, dioxygenase that catalyzes the 2-oxoglutarate-dependent selective hydroxylation of free L-proline to cis-3-hydroxy-L-proline (cis-3-Hyp). This chain is L-proline cis-3-hydroxylase 2, found in Streptomyces sp.